A 644-amino-acid chain; its full sequence is MRPSGDEDRARRRRRRRRRRDLLLSQLCFLASVALLLWSLSSLREQKELDLMDLVGEDRKWMMARKLMQVNDTLTSEDAGLRNSKNCTEPALHEFPNDIFTNEDRRQGAVVLHVLCAIYMFYALAIVCDDFFVPSLEKICERLHLSEDVAGATFMAAGSSAPELFTSVIGVFITKGDVGVGTIVGSAVFNILCIIGVCGLFAGQVVALSSWCLLRDSIYYTLSVIALIVFIYDEKVSWWESLVLVLMYLIYIVIMKYNACIHQCFERRTKGAGNMVNGLANNAEIDDSSNCDATVVLLKKANFHRKASVIMVDELLSAYPHQLSFSEAGLRIMITSHFPPKTRLSMASRMLINERQRLINSRAYTNGESEVAIKIPIKHTVENGTGPSSAPDRGVNGTRRDDVVAEAGNETENENEDNENDEEEEEDEDDDEGPYTPFDTPSGKLETVKWAFTWPLSFVLYFTVPNCNKPRWEKWFMVTFASSTLWIAAFSYMMVWMVTIIGYTLGIPDVIMGITFLAAGTSVPDCMASLIVARQGMGDMAVSNSIGSNVFDILIGLGLPWALQTLAVDYGSYIRLNSRGLIYSVGLLLASVFVTVFGVHLNKWQLDKKLGCGCLLLYGVFLCFSIMTEFNVFTFVNLPMCGDH.

A signal peptide spans 1–44; the sequence is MRPSGDEDRARRRRRRRRRRDLLLSQLCFLASVALLLWSLSSLR. The Extracellular portion of the chain corresponds to 45–107; it reads EQKELDLMDL…DIFTNEDRRQ (63 aa). N-linked (GlcNAc...) asparagine glycans are attached at residues asparagine 71 and asparagine 86. Residues 108-128 traverse the membrane as a helical segment; sequence GAVVLHVLCAIYMFYALAIVC. Topologically, residues 129-153 are cytoplasmic; that stretch reads DDFFVPSLEKICERLHLSEDVAGAT. One copy of the Alpha-1 repeat lies at 149 to 189; it reads VAGATFMAAGSSAPELFTSVIGVFITKGDVGVGTIVGSAVF. The helical transmembrane segment at 154-174 threads the bilayer; the sequence is FMAAGSSAPELFTSVIGVFIT. Topologically, residues 175 to 182 are extracellular; that stretch reads KGDVGVGT. Residues 183–203 traverse the membrane as a helical segment; the sequence is IVGSAVFNILCIIGVCGLFAG. The Cytoplasmic segment spans residues 204 to 210; sequence QVVALSS. Residues 211 to 231 traverse the membrane as a helical segment; sequence WCLLRDSIYYTLSVIALIVFI. The Extracellular segment spans residues 232–234; it reads YDE. The helical transmembrane segment at 235–255 threads the bilayer; it reads KVSWWESLVLVLMYLIYIVIM. Over 256-484 the chain is Cytoplasmic; sequence KYNACIHQCF…WFMVTFASST (229 aa). Phosphoserine is present on serine 308. A disordered region spans residues 405-442; it reads AEAGNETENENEDNENDEEEEEDEDDDEGPYTPFDTPS. Acidic residues predominate over residues 409-433; it reads NETENENEDNENDEEEEEDEDDDEG. A helical transmembrane segment spans residues 485–505; it reads LWIAAFSYMMVWMVTIIGYTL. Topologically, residues 506-510 are extracellular; it reads GIPDV. A helical membrane pass occupies residues 511 to 531; the sequence is IMGITFLAAGTSVPDCMASLI. The stretch at 518 to 549 is one Alpha-2 repeat; it reads AAGTSVPDCMASLIVARQGMGDMAVSNSIGSN. Topologically, residues 532-549 are cytoplasmic; that stretch reads VARQGMGDMAVSNSIGSN. The chain crosses the membrane as a helical span at residues 550 to 570; it reads VFDILIGLGLPWALQTLAVDY. At 571–580 the chain is on the extracellular side; sequence GSYIRLNSRG. The helical transmembrane segment at 581–601 threads the bilayer; that stretch reads LIYSVGLLLASVFVTVFGVHL. The Cytoplasmic portion of the chain corresponds to 602-615; it reads NKWQLDKKLGCGCL. Residues 616-636 traverse the membrane as a helical segment; that stretch reads LLYGVFLCFSIMTEFNVFTFV. Over 637–644 the chain is Extracellular; it reads NLPMCGDH.

The protein belongs to the Ca(2+):cation antiporter (CaCA) (TC 2.A.19) family. SLC24A subfamily. As to expression, abundant in the brain. Expressed at low levels in the aorta, uterus and intestine.

The protein resides in the cell membrane. It carries out the reaction Ca(2+)(out) + K(+)(out) + 4 Na(+)(in) = Ca(2+)(in) + K(+)(in) + 4 Na(+)(out). Calcium, potassium:sodium antiporter that transports 1 Ca(2+) and 1 K(+) in exchange for 4 Na(+). This is Sodium/potassium/calcium exchanger 3 (SLC24A3) from Homo sapiens (Human).